A 292-amino-acid polypeptide reads, in one-letter code: uncharacterized protein (292 aa).

It is found in the virion. This is an uncharacterized protein from Acanthamoeba polyphaga (Amoeba).